Here is a 367-residue protein sequence, read N- to C-terminus: Phosphoribosylaminoimidazole-succinocarboxamide synthase (367 aa).

This sequence belongs to the SAICAR synthetase family.

It carries out the reaction 5-amino-1-(5-phospho-D-ribosyl)imidazole-4-carboxylate + L-aspartate + ATP = (2S)-2-[5-amino-1-(5-phospho-beta-D-ribosyl)imidazole-4-carboxamido]succinate + ADP + phosphate + 2 H(+). It functions in the pathway purine metabolism; IMP biosynthesis via de novo pathway; 5-amino-1-(5-phospho-D-ribosyl)imidazole-4-carboxamide from 5-amino-1-(5-phospho-D-ribosyl)imidazole-4-carboxylate: step 1/2. In Shewanella sp. (strain W3-18-1), this protein is Phosphoribosylaminoimidazole-succinocarboxamide synthase.